A 643-amino-acid polypeptide reads, in one-letter code: tRNA 5-methylaminomethyl-2-thiouridine biosynthesis bifunctional protein MnmC (643 aa).

The tRNA (mnm(5)s(2)U34)-methyltransferase stretch occupies residues 1–223 (MPDRLVSATL…VDDRLVGDYA (223 aa)). An FAD-dependent cmnm(5)s(2)U34 oxidoreductase region spans residues 247–643 (IGAGLAGCAV…LRARRVGSAG (397 aa)).

It in the N-terminal section; belongs to the methyltransferase superfamily. tRNA (mnm(5)s(2)U34)-methyltransferase family. This sequence in the C-terminal section; belongs to the DAO family. It depends on FAD as a cofactor.

The protein resides in the cytoplasm. The enzyme catalyses 5-aminomethyl-2-thiouridine(34) in tRNA + S-adenosyl-L-methionine = 5-methylaminomethyl-2-thiouridine(34) in tRNA + S-adenosyl-L-homocysteine + H(+). Its function is as follows. Catalyzes the last two steps in the biosynthesis of 5-methylaminomethyl-2-thiouridine (mnm(5)s(2)U) at the wobble position (U34) in tRNA. Catalyzes the FAD-dependent demodification of cmnm(5)s(2)U34 to nm(5)s(2)U34, followed by the transfer of a methyl group from S-adenosyl-L-methionine to nm(5)s(2)U34, to form mnm(5)s(2)U34. The polypeptide is tRNA 5-methylaminomethyl-2-thiouridine biosynthesis bifunctional protein MnmC (Burkholderia orbicola (strain MC0-3)).